The following is a 126-amino-acid chain: Large ribosomal subunit protein bL20c (126 aa).

This sequence belongs to the bacterial ribosomal protein bL20 family.

It is found in the plastid. The protein resides in the chloroplast. Binds directly to 23S ribosomal RNA and is necessary for the in vitro assembly process of the 50S ribosomal subunit. It is not involved in the protein synthesizing functions of that subunit. This Lactuca sativa (Garden lettuce) protein is Large ribosomal subunit protein bL20c.